The primary structure comprises 795 residues: Phenylalanine--tRNA ligase beta subunit (795 aa).

In terms of domain architecture, tRNA-binding spans 39 to 148 (AGSFHGVVVG…ADAPIGTDIR (110 aa)). The 76-residue stretch at 401 to 476 (PKRATITLRR…RVYGYNNIPD (76 aa)) folds into the B5 domain. Positions 454, 460, 463, and 464 each coordinate Mg(2+). Positions 701-794 (SRFPANRRDI…LKERFQASLR (94 aa)) constitute an FDX-ACB domain.

The protein belongs to the phenylalanyl-tRNA synthetase beta subunit family. Type 1 subfamily. As to quaternary structure, tetramer of two alpha and two beta subunits. Mg(2+) serves as cofactor.

The protein localises to the cytoplasm. The catalysed reaction is tRNA(Phe) + L-phenylalanine + ATP = L-phenylalanyl-tRNA(Phe) + AMP + diphosphate + H(+). The chain is Phenylalanine--tRNA ligase beta subunit from Escherichia coli O157:H7.